A 156-amino-acid polypeptide reads, in one-letter code: Crossover junction endodeoxyribonuclease RuvC (156 aa).

Residues Asp7, Glu67, and Asp140 contribute to the active site. 3 residues coordinate Mg(2+): Asp7, Glu67, and Asp140.

It belongs to the RuvC family. In terms of assembly, homodimer which binds Holliday junction (HJ) DNA. The HJ becomes 2-fold symmetrical on binding to RuvC with unstacked arms; it has a different conformation from HJ DNA in complex with RuvA. In the full resolvosome a probable DNA-RuvA(4)-RuvB(12)-RuvC(2) complex forms which resolves the HJ. Requires Mg(2+) as cofactor.

It is found in the cytoplasm. It carries out the reaction Endonucleolytic cleavage at a junction such as a reciprocal single-stranded crossover between two homologous DNA duplexes (Holliday junction).. Functionally, the RuvA-RuvB-RuvC complex processes Holliday junction (HJ) DNA during genetic recombination and DNA repair. Endonuclease that resolves HJ intermediates. Cleaves cruciform DNA by making single-stranded nicks across the HJ at symmetrical positions within the homologous arms, yielding a 5'-phosphate and a 3'-hydroxyl group; requires a central core of homology in the junction. The consensus cleavage sequence is 5'-(A/T)TT(C/G)-3'. Cleavage occurs on the 3'-side of the TT dinucleotide at the point of strand exchange. HJ branch migration catalyzed by RuvA-RuvB allows RuvC to scan DNA until it finds its consensus sequence, where it cleaves and resolves the cruciform DNA. The polypeptide is Crossover junction endodeoxyribonuclease RuvC (Rickettsia felis (strain ATCC VR-1525 / URRWXCal2) (Rickettsia azadi)).